The following is a 471-amino-acid chain: MKPKTIIEKIWENHVVYREEGKPDLLYIDLHLVHEVTSPQAFEGLRQNGRKVRRPDLTFATMDHNVPTVNRFVITDEVARNQIAALERNCREFGIPLADLHSEEQGIVHVIGPELGLTQPGKTIVCGDSHTSTHGAFGALAFGIGTSEVEHVLATQTLWQHKPKTLQIRINGQLGKGVTAKDVILAIIGRYGVGVGTGYIIEFTGEAIRRMSMEERMTICNMSIEAGARAGLISPDETTFAYLRGRKYAPKGEEFDQAVERWRALASDEGAEYDKTIEIDASTIAPMVTWGTNPSMSTSVDGTVPDPEQFESETERNAVRRALEYMGLKPGMSITEIPVQHVFIGSCTNSRISDLREAAKIVKGQKVAPGVRALVVPGSQQVKKQAEEEGLAQIFLDAGFEWRDAGCSACLGMNPDIIPEGEHCASTSNRNFEGRQGKGARTHLVSPAMAAAAAIYGRFVDVRQLEAEPVR.

[4Fe-4S] cluster contacts are provided by Cys347, Cys407, and Cys410.

The protein belongs to the aconitase/IPM isomerase family. LeuC type 1 subfamily. As to quaternary structure, heterodimer of LeuC and LeuD. [4Fe-4S] cluster is required as a cofactor.

The catalysed reaction is (2R,3S)-3-isopropylmalate = (2S)-2-isopropylmalate. The protein operates within amino-acid biosynthesis; L-leucine biosynthesis; L-leucine from 3-methyl-2-oxobutanoate: step 2/4. Its function is as follows. Catalyzes the isomerization between 2-isopropylmalate and 3-isopropylmalate, via the formation of 2-isopropylmaleate. The chain is 3-isopropylmalate dehydratase large subunit from Geobacillus thermodenitrificans (strain NG80-2).